A 1137-amino-acid chain; its full sequence is Dendrite extension defective protein 1 (1137 aa).

The N-terminal stretch at 1–41 (MLAHTHRINKCLYGQNQMRNRHALLGALPPIFLLLLPLISC) is a signal peptide. Residues 43-1005 (KFDPERIAAR…HAEEQSPRLA (963 aa)) are Extracellular-facing. The NIDO 1 domain maps to 163 to 302 (PFWNRNDLRN…GEWMFELSEL (140 aa)). N-linked (GlcNAc...) asparagine glycosylation is found at asparagine 240 and asparagine 416. Residues 409 to 450 (DVDECKTNSTICHKNAICTNTPGRYFCMCKEGFSGDGQNDCS) enclose the EGF-like; calcium-binding domain. 3 disulfide bridges follow: cysteine 413–cysteine 426, cysteine 420–cysteine 435, and cysteine 437–cysteine 449. In terms of domain architecture, NIDO 2 spans 519-659 (PFFGPIDLSR…GTWLYRIDKA (141 aa)). Residue asparagine 571 is glycosylated (N-linked (GlcNAc...) asparagine). Residues 738–749 (IGNQQRQQTTKA) show a composition bias toward polar residues. Disordered regions lie at residues 738–765 (IGNQ…HRPI), 795–856 (FRPN…PFEA), 878–897 (QTTK…EDLS), 906–933 (TEED…TKAH), and 978–998 (NSQP…GHAE). Asparagine 756 is a glycosylation site (N-linked (GlcNAc...) asparagine). Polar residues predominate over residues 798-809 (NQRNGVQKSTQR). Positions 819–833 (PLKEEATTSVPREKT) are enriched in basic and acidic residues. The segment covering 906–915 (TEEDEEEAEI) has biased composition (acidic residues). Residues 916-933 (STETTTEMSSTTTTTKAH) show a composition bias toward low complexity. A compositionally biased stretch (polar residues) spans 978–992 (NSQPPKQRNDNQPTV). Residues 1006–1026 (ILLPVMIILAWLVILVCIGAV) form a helical membrane-spanning segment. Residues 1027 to 1037 (VCCKRRNSRES) lie on the Cytoplasmic side of the membrane. Positions 1106-1125 (ARLSTQERQSPPSFVNNGYT) are disordered.

In terms of processing, may be proteolytically cleaved and secreted.

The protein resides in the membrane. The protein localises to the cell projection. It localises to the dendrite. Its subcellular location is the secreted. Its function is as follows. Along with dyf-7, enables neurite growth and maintenance by anchoring amphid dendritic tips during neuron cell body migration in embryonic and larval development. Promotes seam cell remodeling during the dauer phase. Plays a role in positively regulating locomotion during the dauer phase. This chain is Dendrite extension defective protein 1, found in Caenorhabditis elegans.